A 298-amino-acid chain; its full sequence is tRNA pseudouridine synthase B (298 aa).

Residue aspartate 42 is the Nucleophile of the active site.

It belongs to the pseudouridine synthase TruB family. Type 1 subfamily.

It catalyses the reaction uridine(55) in tRNA = pseudouridine(55) in tRNA. Functionally, responsible for synthesis of pseudouridine from uracil-55 in the psi GC loop of transfer RNAs. This is tRNA pseudouridine synthase B from Mycobacterium tuberculosis (strain CDC 1551 / Oshkosh).